The sequence spans 356 residues: SERTA domain-containing protein 4 (356 aa).

Residues 33-53 (SYGGPSPPGPAQAPLQGDRGA) are disordered. The region spanning 101–147 (IFEERAHILYMSLEKLKFIDDPEVYLRRSVLINNLMKRIHGEIIMQN) is the SERTA domain. The segment covering 215 to 232 (TAASSPSASSSSSSSSSS) has biased composition (low complexity). Disordered stretches follow at residues 215–238 (TAASSPSASSSSSSSSSSPPLPLP), 280–302 (KLNDEKANDDTNRDGGPLSHEPV), and 332–356 (WKKSLRKKEASPPSNKLCCSKGSKI). A compositionally biased stretch (basic and acidic residues) spans 280 to 292 (KLNDEKANDDTNR).

This is SERTA domain-containing protein 4 (SERTAD4) from Homo sapiens (Human).